The following is a 320-amino-acid chain: MSTPFKMERGVKYRDAAKTSIIPVKNIDPNQELLKKPEWMKIKLPASSAKIESIKNGMRRHGLHSVCEEASCPNLHECFNHGTATFMILGAICTRRCPFCDVAHGKPLPPDPEEPQKLAETIQDMKLKYVVITSVDRDDLPDRGAGHFSECVKAVRELNPNIKIEILVPDFRGRITQALEKLKDNPPDVFNHNLENVPRLYKEIRPGADYEWSLKLLREFKEIFPNIPTKSGLMVGLGETNEEILQVMQDLRDNGVTMLTLGQYLQPSRHHLPVARYVPPTEFDEFRDKANEMGFEHAACGPFVRSSYHADLQASGGLVK.

Residues C67, C72, C78, C93, C97, C100, and S307 each coordinate [4Fe-4S] cluster. In terms of domain architecture, Radical SAM core spans F79–E296.

Belongs to the radical SAM superfamily. Lipoyl synthase family. Requires [4Fe-4S] cluster as cofactor.

The protein resides in the cytoplasm. It catalyses the reaction [[Fe-S] cluster scaffold protein carrying a second [4Fe-4S](2+) cluster] + N(6)-octanoyl-L-lysyl-[protein] + 2 oxidized [2Fe-2S]-[ferredoxin] + 2 S-adenosyl-L-methionine + 4 H(+) = [[Fe-S] cluster scaffold protein] + N(6)-[(R)-dihydrolipoyl]-L-lysyl-[protein] + 4 Fe(3+) + 2 hydrogen sulfide + 2 5'-deoxyadenosine + 2 L-methionine + 2 reduced [2Fe-2S]-[ferredoxin]. It functions in the pathway protein modification; protein lipoylation via endogenous pathway; protein N(6)-(lipoyl)lysine from octanoyl-[acyl-carrier-protein]: step 2/2. In terms of biological role, catalyzes the radical-mediated insertion of two sulfur atoms into the C-6 and C-8 positions of the octanoyl moiety bound to the lipoyl domains of lipoate-dependent enzymes, thereby converting the octanoylated domains into lipoylated derivatives. The protein is Lipoyl synthase of Haemophilus influenzae (strain 86-028NP).